A 470-amino-acid chain; its full sequence is L-seryl-tRNA(Sec) selenium transferase (470 aa).

N6-(pyridoxal phosphate)lysine is present on Lys-292.

Belongs to the SelA family. Pyridoxal 5'-phosphate is required as a cofactor.

It localises to the cytoplasm. The catalysed reaction is L-seryl-tRNA(Sec) + selenophosphate + H(+) = L-selenocysteinyl-tRNA(Sec) + phosphate. It participates in aminoacyl-tRNA biosynthesis; selenocysteinyl-tRNA(Sec) biosynthesis; selenocysteinyl-tRNA(Sec) from L-seryl-tRNA(Sec) (bacterial route): step 1/1. Converts seryl-tRNA(Sec) to selenocysteinyl-tRNA(Sec) required for selenoprotein biosynthesis. The chain is L-seryl-tRNA(Sec) selenium transferase from Moorella thermoacetica (strain ATCC 39073 / JCM 9320).